A 161-amino-acid chain; its full sequence is Ubiquitin-conjugating enzyme 15 (161 aa).

One can recognise a UBC core domain in the interval 15 to 161 (IACNRLQKEL…TRWWFHDDKV (147 aa)). Catalysis depends on C99, which acts as the Glycyl thioester intermediate.

This sequence belongs to the ubiquitin-conjugating enzyme family.

The catalysed reaction is S-ubiquitinyl-[E1 ubiquitin-activating enzyme]-L-cysteine + [E2 ubiquitin-conjugating enzyme]-L-cysteine = [E1 ubiquitin-activating enzyme]-L-cysteine + S-ubiquitinyl-[E2 ubiquitin-conjugating enzyme]-L-cysteine.. The protein operates within protein modification; protein ubiquitination. In terms of biological role, accepts the ubiquitin from the E1 complex and catalyzes its covalent attachment to other proteins. The polypeptide is Ubiquitin-conjugating enzyme 15 (UBC15) (Arabidopsis thaliana (Mouse-ear cress)).